Here is a 512-residue protein sequence, read N- to C-terminus: Probable malate:quinone oxidoreductase (512 aa).

It belongs to the MQO family. The cofactor is FAD.

The catalysed reaction is (S)-malate + a quinone = a quinol + oxaloacetate. It participates in carbohydrate metabolism; tricarboxylic acid cycle; oxaloacetate from (S)-malate (quinone route): step 1/1. In Rhodococcus erythropolis (strain PR4 / NBRC 100887), this protein is Probable malate:quinone oxidoreductase.